We begin with the raw amino-acid sequence, 436 residues long: Glutamate-1-semialdehyde 2,1-aminomutase (436 aa).

K269 is modified (N6-(pyridoxal phosphate)lysine).

The protein belongs to the class-III pyridoxal-phosphate-dependent aminotransferase family. HemL subfamily. As to quaternary structure, homodimer. The cofactor is pyridoxal 5'-phosphate.

It is found in the cytoplasm. The enzyme catalyses (S)-4-amino-5-oxopentanoate = 5-aminolevulinate. It participates in porphyrin-containing compound metabolism; protoporphyrin-IX biosynthesis; 5-aminolevulinate from L-glutamyl-tRNA(Glu): step 2/2. The protein operates within porphyrin-containing compound metabolism; chlorophyll biosynthesis. The chain is Glutamate-1-semialdehyde 2,1-aminomutase from Heliobacterium modesticaldum (strain ATCC 51547 / Ice1).